A 377-amino-acid chain; its full sequence is Probable isocitrate dehydrogenase [NAD] subunit alpha, mitochondrial (377 aa).

Residues Arg131, Arg141, Arg162, and Asp249 each coordinate substrate. Positions 249, 273, and 277 each coordinate Mg(2+).

Belongs to the isocitrate and isopropylmalate dehydrogenases family. As to quaternary structure, heterooligomer of subunits alpha, beta, and gamma in the apparent ratio of 2:1:1. Requires Mg(2+) as cofactor. It depends on Mn(2+) as a cofactor.

It localises to the mitochondrion. The catalysed reaction is D-threo-isocitrate + NAD(+) = 2-oxoglutarate + CO2 + NADH. In terms of biological role, probable catalytic subunit of the enzyme which catalyzes the decarboxylation of isocitrate (ICT) into alpha-ketoglutarate. In Drosophila melanogaster (Fruit fly), this protein is Probable isocitrate dehydrogenase [NAD] subunit alpha, mitochondrial.